Reading from the N-terminus, the 235-residue chain is Urease accessory protein UreF (235 aa).

It belongs to the UreF family. In terms of assembly, ureD, UreF and UreG form a complex that acts as a GTP-hydrolysis-dependent molecular chaperone, activating the urease apoprotein by helping to assemble the nickel containing metallocenter of UreC. The UreE protein probably delivers the nickel.

It is found in the cytoplasm. Functionally, required for maturation of urease via the functional incorporation of the urease nickel metallocenter. This is Urease accessory protein UreF from Ureaplasma parvum serovar 3 (strain ATCC 27815 / 27 / NCTC 11736).